Consider the following 199-residue polypeptide: Probable nicotinate-nucleotide adenylyltransferase (199 aa).

It belongs to the NadD family.

The catalysed reaction is nicotinate beta-D-ribonucleotide + ATP + H(+) = deamido-NAD(+) + diphosphate. Its pathway is cofactor biosynthesis; NAD(+) biosynthesis; deamido-NAD(+) from nicotinate D-ribonucleotide: step 1/1. In terms of biological role, catalyzes the reversible adenylation of nicotinate mononucleotide (NaMN) to nicotinic acid adenine dinucleotide (NaAD). In Roseobacter denitrificans (strain ATCC 33942 / OCh 114) (Erythrobacter sp. (strain OCh 114)), this protein is Probable nicotinate-nucleotide adenylyltransferase.